Reading from the N-terminus, the 419-residue chain is UDP-N-acetylglucosamine 1-carboxyvinyltransferase (419 aa).

22-23 provides a ligand contact to phosphoenolpyruvate; it reads KN. Arginine 93 is a UDP-N-acetyl-alpha-D-glucosamine binding site. Residue cysteine 117 is the Proton donor of the active site. Cysteine 117 bears the 2-(S-cysteinyl)pyruvic acid O-phosphothioketal mark. 2 residues coordinate UDP-N-acetyl-alpha-D-glucosamine: aspartate 307 and isoleucine 329.

It belongs to the EPSP synthase family. MurA subfamily.

Its subcellular location is the cytoplasm. The catalysed reaction is phosphoenolpyruvate + UDP-N-acetyl-alpha-D-glucosamine = UDP-N-acetyl-3-O-(1-carboxyvinyl)-alpha-D-glucosamine + phosphate. It functions in the pathway cell wall biogenesis; peptidoglycan biosynthesis. Cell wall formation. Adds enolpyruvyl to UDP-N-acetylglucosamine. The sequence is that of UDP-N-acetylglucosamine 1-carboxyvinyltransferase from Pseudoalteromonas atlantica (strain T6c / ATCC BAA-1087).